The following is a 241-amino-acid chain: FKBP-type peptidyl-prolyl cis-trans isomerase FkpA (241 aa).

One can recognise a PPIase FKBP-type domain in the interval 153 to 241 (ETKITVHYKG…IELLDVVNGV (89 aa)).

This sequence belongs to the FKBP-type PPIase family.

It catalyses the reaction [protein]-peptidylproline (omega=180) = [protein]-peptidylproline (omega=0). Functionally, PPIases accelerate the folding of proteins. It catalyzes the cis-trans isomerization of proline imidic peptide bonds in oligopeptides. The chain is FKBP-type peptidyl-prolyl cis-trans isomerase FkpA (fkpA) from Buchnera aphidicola subsp. Acyrthosiphon pisum (strain APS) (Acyrthosiphon pisum symbiotic bacterium).